A 336-amino-acid polypeptide reads, in one-letter code: MIEADRLISAGATIAEDVADRAIRPKLLAEYVGQPQVRSQMEIFIQAAKLRGDALDHLLIFGPPGLGKTTLANIVANEMGVNLRTTSGPVLEKAGDLAAMLTNLEPHDVLFIDEIHRLSPVVEEVLYPAMEDYQLDIMIGEGPAARSIKIDLPPFTLIGATTRAGSLTSPLRDRFGIVQRLEFYQVPDLQHIVGRSARHMGLEMSDDGALEVARRARGTPRIANRLLRRVRDFAEVKHDGAISAEIAAQALDMLNVDAEGFDYMDRKLLLAVIDKFFGGPVGLDNLAAAIGEERETIEDVLEPYLIQQGFLQRTPRGRMATVRAWNHFGITPPEMP.

The segment at 4–184 is large ATPase domain (RuvB-L); it reads ADRLISAGAT…FGIVQRLEFY (181 aa). ATP-binding positions include Ile23, Arg24, Gly65, Lys68, Thr69, Thr70, 131-133, Arg174, Tyr184, and Arg221; that span reads EDY. Residue Thr69 coordinates Mg(2+). A small ATPAse domain (RuvB-S) region spans residues 185 to 255; that stretch reads QVPDLQHIVG…IAAQALDMLN (71 aa). Residues 258–336 form a head domain (RuvB-H) region; that stretch reads AEGFDYMDRK…HFGITPPEMP (79 aa). DNA-binding residues include Arg294, Arg313, and Arg318.

It belongs to the RuvB family. As to quaternary structure, homohexamer. Forms an RuvA(8)-RuvB(12)-Holliday junction (HJ) complex. HJ DNA is sandwiched between 2 RuvA tetramers; dsDNA enters through RuvA and exits via RuvB. An RuvB hexamer assembles on each DNA strand where it exits the tetramer. Each RuvB hexamer is contacted by two RuvA subunits (via domain III) on 2 adjacent RuvB subunits; this complex drives branch migration. In the full resolvosome a probable DNA-RuvA(4)-RuvB(12)-RuvC(2) complex forms which resolves the HJ.

It is found in the cytoplasm. The catalysed reaction is ATP + H2O = ADP + phosphate + H(+). Its function is as follows. The RuvA-RuvB-RuvC complex processes Holliday junction (HJ) DNA during genetic recombination and DNA repair, while the RuvA-RuvB complex plays an important role in the rescue of blocked DNA replication forks via replication fork reversal (RFR). RuvA specifically binds to HJ cruciform DNA, conferring on it an open structure. The RuvB hexamer acts as an ATP-dependent pump, pulling dsDNA into and through the RuvAB complex. RuvB forms 2 homohexamers on either side of HJ DNA bound by 1 or 2 RuvA tetramers; 4 subunits per hexamer contact DNA at a time. Coordinated motions by a converter formed by DNA-disengaged RuvB subunits stimulates ATP hydrolysis and nucleotide exchange. Immobilization of the converter enables RuvB to convert the ATP-contained energy into a lever motion, pulling 2 nucleotides of DNA out of the RuvA tetramer per ATP hydrolyzed, thus driving DNA branch migration. The RuvB motors rotate together with the DNA substrate, which together with the progressing nucleotide cycle form the mechanistic basis for DNA recombination by continuous HJ branch migration. Branch migration allows RuvC to scan DNA until it finds its consensus sequence, where it cleaves and resolves cruciform DNA. This chain is Holliday junction branch migration complex subunit RuvB, found in Salmonella choleraesuis (strain SC-B67).